Here is a 238-residue protein sequence, read N- to C-terminus: Large ribosomal subunit protein uL1 (238 aa).

It belongs to the universal ribosomal protein uL1 family. Part of the 50S ribosomal subunit.

In terms of biological role, binds directly to 23S rRNA. The L1 stalk is quite mobile in the ribosome, and is involved in E site tRNA release. Its function is as follows. Protein L1 is also a translational repressor protein, it controls the translation of the L11 operon by binding to its mRNA. The protein is Large ribosomal subunit protein uL1 of Rickettsia prowazekii (strain Madrid E).